A 416-amino-acid chain; its full sequence is Creatine kinase U-type, mitochondrial (416 aa).

Residues 1 to 39 (MAGPFSRLLSARPGLRLLALAGAGSLAAGFLLRSEPVRA) constitute a mitochondrion transit peptide. The cardiolipin-binding stretch occupies residues 40 to 64 (ASERRRLYPPSAEYPDLRKHNNCMA). Residues 45–131 (RLYPPSAEYP…FDPVIQERHN (87 aa)) form the Phosphagen kinase N-terminal domain. Ser-151 carries the phosphoserine modification. Positions 158–400 (YVLSSRVRTG…NFLIDCERRL (243 aa)) constitute a Phosphagen kinase C-terminal domain. 161 to 165 (SSRVR) is a binding site for ATP. Ser-196 carries the phosphoserine modification. Thr-213 bears the Phosphothreonine mark. His-224 is a binding site for ATP. The residue at position 232 (Ser-232) is a Phosphoserine. Residues Arg-269, Arg-325, and 353-358 (RGTGGV) each bind ATP. Thr-355 bears the Phosphothreonine mark. Ser-365 is modified (phosphoserine). An ATP-binding site is contributed by Asp-368.

The protein belongs to the ATP:guanido phosphotransferase family. As to quaternary structure, exists as an octamer composed of four MTCK homodimers.

The protein localises to the mitochondrion inner membrane. The enzyme catalyses creatine + ATP = N-phosphocreatine + ADP + H(+). Reversibly catalyzes the transfer of phosphate between ATP and various phosphogens (e.g. creatine phosphate). Creatine kinase isoenzymes play a central role in energy transduction in tissues with large, fluctuating energy demands, such as skeletal muscle, heart, brain and spermatozoa. This is Creatine kinase U-type, mitochondrial (CKMT1) from Bos taurus (Bovine).